A 63-amino-acid chain; its full sequence is Large ribosomal subunit protein uL30 (63 aa).

Belongs to the universal ribosomal protein uL30 family. In terms of assembly, part of the 50S ribosomal subunit.

This is Large ribosomal subunit protein uL30 from Chlorobium chlorochromatii (strain CaD3).